The following is a 474-amino-acid chain: P2X purinoceptor 2 (474 aa).

Over 1 to 42 (MAATHPKAPTAQRLRQGWSAFWDYETPKVIVVRNRPLGVVYR) the chain is Cytoplasmic. A helical transmembrane segment spans residues 43–60 (AVQLLILLYFVWYVFIVQ). Over 61 to 333 (KSYQDSETGP…IVHGQAGKFS (273 aa)) the chain is Extracellular. ATP-binding residues include Lys77 and Lys79. 3 disulfide bridges follow: Cys121–Cys172, Cys132–Cys155, and Cys138–Cys166. An N-linked (GlcNAc...) asparagine glycan is attached at Asn129. Residue Asn190 is glycosylated (N-linked (GlcNAc...) asparagine). Thr192 is an ATP binding site. Cys222 and Cys232 are disulfide-bonded. Asn247 carries N-linked (GlcNAc...) asparagine glycosylation. Cys266 and Cys275 form a disulfide bridge. Positions 292, 296, and 298 each coordinate ATP. Asn306 carries N-linked (GlcNAc...) asparagine glycosylation. Lys315 contributes to the ATP binding site. Residues 316–329 (AYGIRIDVIVHGQA) form a pore-forming motif region. The chain crosses the membrane as a helical span at residues 334-354 (LIPTIINLATALTSIGVGSFL). Topologically, residues 355–474 (CDWILLTFMN…PTDPKGLAQL (120 aa)) are cytoplasmic. The segment at 445 to 474 (PDRCVGQGLPSSESPLQDSTPTDPKGLAQL) is disordered. Residues 453–466 (LPSSESPLQDSTPT) show a composition bias toward polar residues.

This sequence belongs to the P2X receptor family. In terms of assembly, homotrimer and heterotrimer; functional P2XRs are organized as homomeric and heteromeric trimers. Homotrimer. Forms heterodimer with P2RX1. Forms heterotrimer with P2RX6. Forms heterotrimer with P2RX3. Express in organ of Corti.

The protein resides in the cell membrane. It carries out the reaction Ca(2+)(in) = Ca(2+)(out). The catalysed reaction is K(+)(in) = K(+)(out). It catalyses the reaction Na(+)(in) = Na(+)(out). With respect to regulation, fast activation by external ATP. Exhibits slow desensitization during prolonged ATP activation. Not sensitive to the ATP agonist:alpha/beta-methylene-ATP. Its function is as follows. ATP-gated nonselective transmembrane cation channel permeable to potassium, sodium and calcium. Activation by extracellular ATP induces a variety of cellular responses, such as excitatory postsynaptic responses in sensory neurons, neuromuscular junctions (NMJ) formation, hearing, perception of taste and peristalsis. In the inner ear, regulates sound transduction and auditory neurotransmission, outer hair cell electromotility, inner ear gap junctions, and K(+) recycling. Mediates synaptic transmission between neurons and from neurons to smooth muscle. This is P2X purinoceptor 2 (P2RX2) from Cavia porcellus (Guinea pig).